A 426-amino-acid chain; its full sequence is Glutamate-1-semialdehyde 2,1-aminomutase (426 aa).

Lysine 265 carries the post-translational modification N6-(pyridoxal phosphate)lysine.

This sequence belongs to the class-III pyridoxal-phosphate-dependent aminotransferase family. HemL subfamily. As to quaternary structure, homodimer. Requires pyridoxal 5'-phosphate as cofactor.

The protein localises to the cytoplasm. It catalyses the reaction (S)-4-amino-5-oxopentanoate = 5-aminolevulinate. It functions in the pathway porphyrin-containing compound metabolism; protoporphyrin-IX biosynthesis; 5-aminolevulinate from L-glutamyl-tRNA(Glu): step 2/2. In Paraburkholderia phymatum (strain DSM 17167 / CIP 108236 / LMG 21445 / STM815) (Burkholderia phymatum), this protein is Glutamate-1-semialdehyde 2,1-aminomutase.